A 458-amino-acid chain; its full sequence is Riboflavin transporter 2 (458 aa).

The next 5 helical transmembrane spans lie at Leu11–Val31, Trp38–Val58, Pro73–Trp93, Val97–Val117, and Gly146–Cys166. 4 N-linked (GlcNAc...) asparagine glycosylation sites follow: Asn168, Asn176, Asn182, and Asn199. A helical transmembrane segment spans residues Val204–Asn224. The interval Asp249–Ala274 is disordered. The next 5 membrane-spanning stretches (helical) occupy residues Phe279 to Val299, Leu325 to Pro345, Leu349 to Met369, Ile388 to Val408, and Ala417 to Phe437.

It belongs to the riboflavin transporter family.

It is found in the cell membrane. It catalyses the reaction riboflavin(in) = riboflavin(out). Functionally, plasma membrane transporter mediating the uptake by cells of the water soluble vitamin B2/riboflavin that plays a key role in biochemical oxidation-reduction reactions of the carbohydrate, lipid, and amino acid metabolism. The protein is Riboflavin transporter 2 (rft2) of Salmo salar (Atlantic salmon).